The primary structure comprises 440 residues: Protein disulfide-isomerase A6 homolog (440 aa).

An N-terminal signal peptide occupies residues 1-18 (MALIKLLLASLAITSVCG). 2 Thioredoxin domains span residues 19-131 (MYSK…AEAK) and 127-273 (LAEA…ARAQ). Residues Cys54 and Cys57 each act as nucleophile in the active site. Cys54 and Cys57 are oxidised to a cystine. The disordered stretch occupies residues 138-164 (LGGKSSGSSSSGSGSGSGKRGGGGSGN). The span at 139 to 149 (GGKSSGSSSSG) shows a compositional bias: low complexity. Residues 150-163 (SGSGSGKRGGGGSG) show a composition bias toward gly residues. Active-site nucleophile residues include Cys194 and Cys197. Cysteines 194 and 197 form a disulfide. The tract at residues 404–426 (DGFPKIQKTEKWDGKDGALPAED) is disordered. Residues 410–419 (QKTEKWDGKD) show a composition bias toward basic and acidic residues. A Prevents secretion from ER motif is present at residues 437-440 (KTEL).

It belongs to the protein disulfide isomerase family.

Its subcellular location is the endoplasmic reticulum lumen. It catalyses the reaction Catalyzes the rearrangement of -S-S- bonds in proteins.. May function as a chaperone that inhibits aggregation of misfolded proteins. May negatively regulate the unfolded protein response (UPR) through binding to UPR sensors. The chain is Protein disulfide-isomerase A6 homolog from Caenorhabditis elegans.